The primary structure comprises 250 residues: Triosephosphate isomerase (250 aa).

9-11 (NWK) is a binding site for substrate. Catalysis depends on histidine 96, which acts as the Electrophile. Residue glutamate 168 is the Proton acceptor of the active site. Substrate is bound by residues glycine 174, serine 216, and 237–238 (GG).

It belongs to the triosephosphate isomerase family. As to quaternary structure, homodimer.

Its subcellular location is the cytoplasm. The enzyme catalyses D-glyceraldehyde 3-phosphate = dihydroxyacetone phosphate. The protein operates within carbohydrate biosynthesis; gluconeogenesis. It functions in the pathway carbohydrate degradation; glycolysis; D-glyceraldehyde 3-phosphate from glycerone phosphate: step 1/1. Its function is as follows. Involved in the gluconeogenesis. Catalyzes stereospecifically the conversion of dihydroxyacetone phosphate (DHAP) to D-glyceraldehyde-3-phosphate (G3P). The polypeptide is Triosephosphate isomerase (Leptospira interrogans serogroup Icterohaemorrhagiae serovar Lai (strain 56601)).